The chain runs to 204 residues: Large ribosomal subunit protein bL25 (204 aa).

Belongs to the bacterial ribosomal protein bL25 family. CTC subfamily. In terms of assembly, part of the 50S ribosomal subunit; part of the 5S rRNA/L5/L18/L25 subcomplex. Contacts the 5S rRNA. Binds to the 5S rRNA independently of L5 and L18.

Functionally, this is one of the proteins that binds to the 5S RNA in the ribosome where it forms part of the central protuberance. The protein is Large ribosomal subunit protein bL25 of Burkholderia mallei (strain NCTC 10247).